The primary structure comprises 107 residues: Small ribosomal subunit protein bS18 (107 aa).

Belongs to the bacterial ribosomal protein bS18 family. As to quaternary structure, part of the 30S ribosomal subunit. Forms a tight heterodimer with protein bS6.

Its function is as follows. Binds as a heterodimer with protein bS6 to the central domain of the 16S rRNA, where it helps stabilize the platform of the 30S subunit. In Mycoplasmopsis agalactiae (strain NCTC 10123 / CIP 59.7 / PG2) (Mycoplasma agalactiae), this protein is Small ribosomal subunit protein bS18.